The following is a 152-amino-acid chain: Large ribosomal subunit protein uL13 (152 aa).

This sequence belongs to the universal ribosomal protein uL13 family. As to quaternary structure, part of the 50S ribosomal subunit.

In terms of biological role, this protein is one of the early assembly proteins of the 50S ribosomal subunit, although it is not seen to bind rRNA by itself. It is important during the early stages of 50S assembly. This Neorickettsia sennetsu (strain ATCC VR-367 / Miyayama) (Ehrlichia sennetsu) protein is Large ribosomal subunit protein uL13.